An 86-amino-acid chain; its full sequence is Progonadoliberin-2 (86 aa).

An N-terminal signal peptide occupies residues 1-24; it reads MVSVARLVFMLGPLLCLGAQLSSS. Q25 bears the Pyrrolidone carboxylic acid mark. G34 carries the post-translational modification Glycine amide.

The protein belongs to the GnRH family.

Its subcellular location is the secreted. In terms of biological role, stimulates the secretion of gonadotropins. The protein is Progonadoliberin-2 (gnrh2) of Oncorhynchus mykiss (Rainbow trout).